The primary structure comprises 357 residues: Phosphate acyltransferase (357 aa).

Belongs to the PlsX family. Homodimer. Probably interacts with PlsY.

The protein resides in the cytoplasm. The catalysed reaction is a fatty acyl-[ACP] + phosphate = an acyl phosphate + holo-[ACP]. The protein operates within lipid metabolism; phospholipid metabolism. Its function is as follows. Catalyzes the reversible formation of acyl-phosphate (acyl-PO(4)) from acyl-[acyl-carrier-protein] (acyl-ACP). This enzyme utilizes acyl-ACP as fatty acyl donor, but not acyl-CoA. The protein is Phosphate acyltransferase of Herminiimonas arsenicoxydans.